The primary structure comprises 253 residues: tRNA pseudouridine synthase A (253 aa).

Aspartate 52 serves as the catalytic Nucleophile. Tyrosine 111 serves as a coordination point for substrate.

Belongs to the tRNA pseudouridine synthase TruA family. Homodimer.

The enzyme catalyses uridine(38/39/40) in tRNA = pseudouridine(38/39/40) in tRNA. In terms of biological role, formation of pseudouridine at positions 38, 39 and 40 in the anticodon stem and loop of transfer RNAs. In Methylobacterium radiotolerans (strain ATCC 27329 / DSM 1819 / JCM 2831 / NBRC 15690 / NCIMB 10815 / 0-1), this protein is tRNA pseudouridine synthase A.